The sequence spans 326 residues: Vitamin B12 import system permease protein BtuC (326 aa).

The next 9 helical transmembrane spans lie at 15–35 (WLLC…CAGE), 61–81 (LAVL…QALF), 88–108 (PGLL…VLLG), 112–132 (LPNW…TLIL), 146–166 (LLAG…AIYF), 184–204 (GGVD…LLWI), 240–260 (GWMV…GLVI), 274–294 (VLLP…DVVA), and 302–322 (ELPI…WLLL).

It belongs to the binding-protein-dependent transport system permease family. FecCD subfamily. In terms of assembly, the complex is composed of two ATP-binding proteins (BtuD), two transmembrane proteins (BtuC) and a solute-binding protein (BtuF).

It is found in the cell inner membrane. Part of the ABC transporter complex BtuCDF involved in vitamin B12 import. Involved in the translocation of the substrate across the membrane. The polypeptide is Vitamin B12 import system permease protein BtuC (Escherichia coli O17:K52:H18 (strain UMN026 / ExPEC)).